Consider the following 353-residue polypeptide: MIKTDILIIGAGPTGLFAVFEAGLLKLKCHLIDALPQPGGQCSEIYPKKPIYDIPGFPEVLAGDLVDNLMEQIKPFEPGFTLGERAETIDKQEDGSFIVTTSQGAKHHAPVVVIAGGLGSFEPRKPPIPSIKEYENKGVAYIIRDPEVYRDKKVVIAGGGDSALDWSIFLADVASEVSLVHRRKDFRGALDSVEKVEELSKIGKINLITDAEVVDLKGENELDSVLIRHRDQARGEELKDTDHFIPLFGLSPKLGPIANWGLEIEKNAIKVDNAYDYQTNIPGIYAIGDVNTYKGKLKLILCGFHEAAIMCQSAYQRINPDKKYVMKYTTVSGVSGFDGSKKEAKKEVVKSIN.

FAD-binding residues include T14, D33, Q41, Y46, A86, F121, D289, and T330.

Belongs to the ferredoxin--NADP reductase type 2 family. As to quaternary structure, homodimer. FAD serves as cofactor.

The catalysed reaction is 2 reduced [2Fe-2S]-[ferredoxin] + NADP(+) + H(+) = 2 oxidized [2Fe-2S]-[ferredoxin] + NADPH. The protein is Ferredoxin--NADP reductase 1 of Christiangramia forsetii (strain DSM 17595 / CGMCC 1.15422 / KT0803) (Gramella forsetii).